Here is a 331-residue protein sequence, read N- to C-terminus: Phosphoribosylformylglycinamidine cyclo-ligase (331 aa).

It belongs to the AIR synthase family.

Its subcellular location is the cytoplasm. The enzyme catalyses 2-formamido-N(1)-(5-O-phospho-beta-D-ribosyl)acetamidine + ATP = 5-amino-1-(5-phospho-beta-D-ribosyl)imidazole + ADP + phosphate + H(+). It participates in purine metabolism; IMP biosynthesis via de novo pathway; 5-amino-1-(5-phospho-D-ribosyl)imidazole from N(2)-formyl-N(1)-(5-phospho-D-ribosyl)glycinamide: step 2/2. This chain is Phosphoribosylformylglycinamidine cyclo-ligase, found in Clostridium botulinum (strain ATCC 19397 / Type A).